The primary structure comprises 380 residues: Cytochrome b (380 aa).

Transmembrane regions (helical) follow at residues 33 to 53 (FGSLLGLCLLTQILTGLFLAM), 77 to 98 (WLIRNFHANGASFFFICLYLHI), 113 to 133 (WNVGVVLFLLVMMTAFVGYVL), and 178 to 198 (FFAFHFLFPFIIAAMTILHFL). 2 residues coordinate heme b: histidine 83 and histidine 97. Residues histidine 182 and histidine 196 each coordinate heme b. An a ubiquinone-binding site is contributed by histidine 201. The next 4 membrane-spanning stretches (helical) occupy residues 226–246 (YKDLLGFVVMLLALSTLSLFS), 288–308 (LGGVLALLSSILILMLVPILH), 320–340 (LTQILFWVLVADVAILTWIGG), and 347–367 (FIIVGQVASVLYFALFLVIMP).

The protein belongs to the cytochrome b family. The cytochrome bc1 complex contains 3 respiratory subunits (MT-CYB, CYC1 and UQCRFS1), 2 core proteins (UQCRC1 and UQCRC2) and probably 6 low-molecular weight proteins. The cofactor is heme b.

The protein resides in the mitochondrion inner membrane. Functionally, component of the ubiquinol-cytochrome c reductase complex (complex III or cytochrome b-c1 complex) that is part of the mitochondrial respiratory chain. The b-c1 complex mediates electron transfer from ubiquinol to cytochrome c. Contributes to the generation of a proton gradient across the mitochondrial membrane that is then used for ATP synthesis. This chain is Cytochrome b (mt-cyb), found in Zeus faber (John Dory).